The sequence spans 222 residues: THAP domain-containing protein 6 (222 aa).

The segment at 1 to 89 (MVKCCSAIGC…LKPGVIPSIF (89 aa)) adopts a THAP-type zinc-finger fold. The short motif at 139–142 (EHSY) is the HCFC1-binding motif (HBM) element. A coiled-coil region spans residues 149-194 (KKLKHKLDHVIGELEDTKESLRNVLDREKRFQKSLRKTIRELKDEC).

This chain is THAP domain-containing protein 6 (THAP6), found in Homo sapiens (Human).